The following is a 396-amino-acid chain: tRNA-specific 2-thiouridylase MnmA (396 aa).

Residues 11-18 (GLSGGVDS) and methionine 37 each bind ATP. The interval 97-99 (NPD) is interaction with target base in tRNA. Cysteine 102 (nucleophile) is an active-site residue. Cysteines 102 and 225 form a disulfide. Glycine 126 contributes to the ATP binding site. The tract at residues 175 to 177 (KDQ) is interaction with tRNA. Cysteine 225 (cysteine persulfide intermediate) is an active-site residue. The interval 343–344 (RY) is interaction with tRNA.

This sequence belongs to the MnmA/TRMU family.

Its subcellular location is the cytoplasm. It catalyses the reaction S-sulfanyl-L-cysteinyl-[protein] + uridine(34) in tRNA + AH2 + ATP = 2-thiouridine(34) in tRNA + L-cysteinyl-[protein] + A + AMP + diphosphate + H(+). Functionally, catalyzes the 2-thiolation of uridine at the wobble position (U34) of tRNA, leading to the formation of s(2)U34. The sequence is that of tRNA-specific 2-thiouridylase MnmA from Methylibium petroleiphilum (strain ATCC BAA-1232 / LMG 22953 / PM1).